We begin with the raw amino-acid sequence, 243 residues long: uncharacterized protein (243 aa).

The Bipartite nuclear localization signal signature appears at 207-224; sequence KKTSISGYKTLDVKRKFV.

This is an uncharacterized protein from Acheta domesticus (House cricket).